Reading from the N-terminus, the 148-residue chain is Lipoprotein signal peptidase (148 aa).

2 helical membrane passes run 57 to 77 and 88 to 105; these read VLLVLVTLLIMIGVIYYFIKY and VSFIVSGALGNLYDRIFY. Residues Asp-110 and Asp-129 contribute to the active site. The helical transmembrane segment at 124 to 144 threads the bilayer; sequence TFNIADILVVVGTIMLAIFLL.

Belongs to the peptidase A8 family.

The protein resides in the cell membrane. The enzyme catalyses Release of signal peptides from bacterial membrane prolipoproteins. Hydrolyzes -Xaa-Yaa-Zaa-|-(S,diacylglyceryl)Cys-, in which Xaa is hydrophobic (preferably Leu), and Yaa (Ala or Ser) and Zaa (Gly or Ala) have small, neutral side chains.. Its pathway is protein modification; lipoprotein biosynthesis (signal peptide cleavage). Its function is as follows. This protein specifically catalyzes the removal of signal peptides from prolipoproteins. The chain is Lipoprotein signal peptidase from Clostridium novyi (strain NT).